Reading from the N-terminus, the 105-residue chain is Large ribosomal subunit protein uL24 (105 aa).

It belongs to the universal ribosomal protein uL24 family. Part of the 50S ribosomal subunit.

Its function is as follows. One of two assembly initiator proteins, it binds directly to the 5'-end of the 23S rRNA, where it nucleates assembly of the 50S subunit. One of the proteins that surrounds the polypeptide exit tunnel on the outside of the subunit. The chain is Large ribosomal subunit protein uL24 from Francisella tularensis subsp. tularensis (strain FSC 198).